The sequence spans 416 residues: Phosphoglycerate kinase (416 aa).

(2R)-3-phosphoglycerate is bound by residues valine 23, aspartate 24, phenylalanine 25, asparagine 26, glutamine 38, arginine 39, serine 62, histidine 63, glycine 65, arginine 66, leucine 121, arginine 122, histidine 168, and arginine 169. ADP is bound at residue glycine 212. Position 212 (glycine 212) interacts with CDP. AMP contacts are provided by alanine 213 and lysine 214. Alanine 213 contributes to the ATP binding site. Residue alanine 213 coordinates Mg(2+). Residues alanine 216 and aspartate 217 each contribute to the Mg(2+) site. Aspartate 217 serves as a coordination point for CDP. Lysine 218 is an AMP binding site. An ATP-binding site is contributed by lysine 218. An ADP-binding site is contributed by glycine 236. Glycine 236 lines the CDP pocket. AMP contacts are provided by glycine 237 and glycine 311. Glycine 237 and glycine 311 together coordinate ATP. CDP is bound by residues glycine 336 and phenylalanine 341. Residue phenylalanine 341 participates in ADP binding. An AMP-binding site is contributed by glutamate 342. ATP-binding residues include glutamate 342, aspartate 373, and threonine 374. Residue aspartate 373 coordinates Mg(2+).

Belongs to the phosphoglycerate kinase family. In terms of assembly, monomer. Mg(2+) is required as a cofactor.

It localises to the cytoplasm. The protein resides in the mitochondrion. The catalysed reaction is (2R)-3-phosphoglycerate + ATP = (2R)-3-phospho-glyceroyl phosphate + ADP. The protein operates within carbohydrate degradation; glycolysis; pyruvate from D-glyceraldehyde 3-phosphate: step 2/5. In terms of biological role, catalyzes one of the two ATP producing reactions in the glycolytic pathway via the reversible conversion of 1,3-diphosphoglycerate to 3-phosphoglycerate. Both L- and D- forms of purine and pyrimidine nucleotides can be used as substrates, but the activity is much lower on pyrimidines. Negatively regulates the biosynthesis of acetyl-CoA from pyruvate in the mitochondrion. The chain is Phosphoglycerate kinase (PGK) from Kluyveromyces lactis (strain ATCC 8585 / CBS 2359 / DSM 70799 / NBRC 1267 / NRRL Y-1140 / WM37) (Yeast).